We begin with the raw amino-acid sequence, 217 residues long: ATP phosphoribosyltransferase (217 aa).

It belongs to the ATP phosphoribosyltransferase family. Short subfamily. As to quaternary structure, heteromultimer composed of HisG and HisZ subunits.

The protein resides in the cytoplasm. It catalyses the reaction 1-(5-phospho-beta-D-ribosyl)-ATP + diphosphate = 5-phospho-alpha-D-ribose 1-diphosphate + ATP. It participates in amino-acid biosynthesis; L-histidine biosynthesis; L-histidine from 5-phospho-alpha-D-ribose 1-diphosphate: step 1/9. Functionally, catalyzes the condensation of ATP and 5-phosphoribose 1-diphosphate to form N'-(5'-phosphoribosyl)-ATP (PR-ATP). Has a crucial role in the pathway because the rate of histidine biosynthesis seems to be controlled primarily by regulation of HisG enzymatic activity. The protein is ATP phosphoribosyltransferase of Burkholderia multivorans (strain ATCC 17616 / 249).